Consider the following 523-residue polypeptide: Calcium-dependent protein kinase 28 (523 aa).

G2 carries the N-myristoyl glycine lipid modification. The S-palmitoyl cysteine moiety is linked to residue C4. Positions 15–43 are disordered; it reads SSRRSSQTKSKAAPTPIDTKASTKRRTGS. In terms of domain architecture, Protein kinase spans 62 to 322; it reads YTIGKLLGHG…AAQALSHAWV (261 aa). Residues 68 to 76 and K91 each bind ATP; that span reads LGHGQFGYT. D188 functions as the Proton acceptor in the catalytic mechanism. 2 positions are modified to phosphoserine: S228 and S318. The segment at 328–358 is autoinhibitory domain; it reads ATDIPVDISVLNNLRQFVRYSRLKQFALRAL. 4 consecutive EF-hand domains span residues 365–400, 402–437, 444–479, and 482–509; these read AEISDLRDQFDAIDVDKNGVISLEEMRQALAKDLPW, LKDSRVAEILEAIDSNTDGLVDFTEFVAAALHVHQL, KWQLRSRAAFEKFDLDKDGYITPEELRMHTGLRGSI, and LLDEADIDRDGKISLHEFRRLLRTASIS. Ca(2+) is bound by residues D378, D380, N382, E389, D415, N417, D419, E426, D457, D459, D461, Y463, E468, D487, D489, D491, and K493. Residue S495 is modified to Phosphoserine. Position 498 (E498) interacts with Ca(2+). A Phosphoserine modification is found at S515.

This sequence belongs to the protein kinase superfamily. Ser/Thr protein kinase family. CDPK subfamily. Interacts with BIK1. In terms of tissue distribution, expressed in vascular and meristematic tissues throughout plant development.

The protein resides in the cell membrane. The catalysed reaction is L-seryl-[protein] + ATP = O-phospho-L-seryl-[protein] + ADP + H(+). It carries out the reaction L-threonyl-[protein] + ATP = O-phospho-L-threonyl-[protein] + ADP + H(+). Its activity is regulated as follows. Activated by calcium. Autophosphorylation plays an important role in the regulation of the kinase activity. May play a role in signal transduction pathways that involve calcium as a second messenger. Acts as a developmentally controlled regulator for coordinated stem elongation and vascular development. Acts as a key component which contributes to the developmental switch that establishes the transition from vegetative to reproductive growth. Involved in pathogen-associated molecular pattern (PAMP)-triggered immunity (PTI) signaling. Interacts with and phosphorylates the kinase BIK1, a central rate-limiting kinase in PTI signaling. Facilitates BIK1 turnover and negatively regulates BIK1-mediated immune responses triggered by several PAMPs. Its kinase activity is necessary and sufficient for its function in PTI signaling. The protein is Calcium-dependent protein kinase 28 of Arabidopsis thaliana (Mouse-ear cress).